Consider the following 148-residue polypeptide: Large ribosomal subunit protein bL9 (148 aa).

It belongs to the bacterial ribosomal protein bL9 family.

Functionally, binds to the 23S rRNA. The chain is Large ribosomal subunit protein bL9 from Desulfitobacterium hafniense (strain DSM 10664 / DCB-2).